The primary structure comprises 338 residues: MIQKNWQTLEKPSKLDITPGSDPKREATIVAGPLERGFGLTLGNAIRRVLLSSLQGAAVTSIHIDGVLHEFSSIPGVREDVTDIVLNIKAMALKMGAEGPRRMRLRAEGPCEVTAGMIETGADIEVLDPGHVICTLDSGARLNMELTVAMGKGYVPASQNRPEDAPIGLIPVDAIFSPVRKVAYKVENTRVGQTTDYDKLLLNVETNGAVSPEDAVAIAARILQDQLQMFINFEEPQAAVAETKADEIPFNKNLLRKVDELELSVRSANCLKNDNIVYIGDLVQKTEAEMLRTPNFGRKSLNEIKEVLAQMGLHLGMEIPNWPPENIEDLAKRLEEPY.

Residues Met-1–Glu-10 are compositionally biased toward polar residues. The interval Met-1 to Lys-24 is disordered. The alpha N-terminal domain (alpha-NTD) stretch occupies residues Met-1 to Glu-234. The interval Phe-250 to Tyr-338 is alpha C-terminal domain (alpha-CTD).

The protein belongs to the RNA polymerase alpha chain family. Homodimer. The RNAP catalytic core consists of 2 alpha, 1 beta, 1 beta' and 1 omega subunit. When a sigma factor is associated with the core the holoenzyme is formed, which can initiate transcription.

The enzyme catalyses RNA(n) + a ribonucleoside 5'-triphosphate = RNA(n+1) + diphosphate. Functionally, DNA-dependent RNA polymerase catalyzes the transcription of DNA into RNA using the four ribonucleoside triphosphates as substrates. The chain is DNA-directed RNA polymerase subunit alpha from Rhodospirillum centenum (strain ATCC 51521 / SW).